A 238-amino-acid chain; its full sequence is MKLSLSVALSLAAATAQAATQFCDQWGSVTEGNYILYNNLWGQAQATSGSQCTTFESLSGNTIVWNTKWSWSGGQGQVKSFANAALQFTPKKLSSVKSIDSTWKWNYSGSNIVADVAYDMFLSTSPGGDHNYEIMVWLGALGGAGPISSTGSPIATPTVAGIKFNLYLGPNGSMQVYSFVAQSTTNSFSGDMRDFFTYLESNQGLSSDLYLVDVQAGTEPFSGSNAVFTVSDYSVSVA.

Positions 1–18 (MKLSLSVALSLAAATAQA) are cleaved as a signal peptide. N-linked (GlcNAc...) asparagine glycans are attached at residues Asn-106 and Asn-171.

It belongs to the glycosyl hydrolase 12 (cellulase H) family.

The protein resides in the secreted. It catalyses the reaction xyloglucan + H2O = xyloglucan oligosaccharides.. Catalyzes endohydrolysis of 1,4-beta-D-glucosidic linkages in xyloglucan with retention of the beta-configuration of the glycosyl residues. Specific for xyloglucan and does not hydrolyze other cell wall components. In Aspergillus fumigatus (strain CBS 144.89 / FGSC A1163 / CEA10) (Neosartorya fumigata), this protein is Probable xyloglucan-specific endo-beta-1,4-glucanase A (xgeA).